The following is a 102-amino-acid chain: Small ribosomal subunit protein uS10 (102 aa).

Belongs to the universal ribosomal protein uS10 family. In terms of assembly, part of the 30S ribosomal subunit.

Involved in the binding of tRNA to the ribosomes. This chain is Small ribosomal subunit protein uS10, found in Bifidobacterium longum (strain DJO10A).